Consider the following 59-residue polypeptide: MSQHLVPEAKNGLSKFKNEVAAEMGVPFSDYNGDLSSKQCGSVGGEMVKRMVEQYEKGI.

This sequence belongs to the alpha/beta-type SASP family. Post-translationally, SASP are degraded in the first minutes of spore germination and provide amino acids for both new protein synthesis and metabolism.

Functionally, SASP are bound to spore DNA. They are double-stranded DNA-binding proteins that cause DNA to change to an a-like conformation. They protect the DNA backbone from chemical and enzymatic cleavage and are thus involved in dormant spore's high resistance to UV light. This Clostridium perfringens (strain 13 / Type A) protein is Small, acid-soluble spore protein C1 (sspC1).